The sequence spans 260 residues: Tropinone reductase homolog At2g29330 (260 aa).

13 to 37 contacts NADP(+); it reads LVTGGASGIGHAIVEELAGFGAKIH. Serine 146 contacts substrate. The Proton acceptor role is filled by tyrosine 159.

Belongs to the short-chain dehydrogenases/reductases (SDR) family. SDR65C subfamily.

In terms of biological role, reductase active only on small flexible lipophilic carbonyls. No activity with cyclic monoterpenes, tropinone, nitrogen-containing tropinone analogs, tropine or pseudotropine as substrate. In Arabidopsis thaliana (Mouse-ear cress), this protein is Tropinone reductase homolog At2g29330.